Consider the following 234-residue polypeptide: Sugar fermentation stimulation protein homolog (234 aa).

This sequence belongs to the SfsA family.

The protein is Sugar fermentation stimulation protein homolog of Shewanella sp. (strain ANA-3).